Here is a 298-residue protein sequence, read N- to C-terminus: Probable GTP 3',8-cyclase (298 aa).

In terms of domain architecture, Radical SAM core spans 4-230 (KFGREIRSLR…RKKYIVDGLE (227 aa)). Arg-13 lines the GTP pocket. Residues Cys-20 and Cys-24 each coordinate [4Fe-4S] cluster. Tyr-26 contacts S-adenosyl-L-methionine. Cys-27 provides a ligand contact to [4Fe-4S] cluster. Lys-61 provides a ligand contact to GTP. An S-adenosyl-L-methionine-binding site is contributed by Gly-65. Thr-91 is a GTP binding site. Ser-115 lines the S-adenosyl-L-methionine pocket. Lys-152 serves as a coordination point for GTP. Cys-243 and Cys-246 together coordinate [4Fe-4S] cluster. 248–250 (RIR) contributes to the GTP binding site. Cys-260 contributes to the [4Fe-4S] cluster binding site.

Belongs to the radical SAM superfamily. MoaA family. [4Fe-4S] cluster is required as a cofactor.

The catalysed reaction is GTP + AH2 + S-adenosyl-L-methionine = (8S)-3',8-cyclo-7,8-dihydroguanosine 5'-triphosphate + 5'-deoxyadenosine + L-methionine + A + H(+). Its pathway is cofactor biosynthesis; molybdopterin biosynthesis. Functionally, catalyzes the cyclization of GTP to (8S)-3',8-cyclo-7,8-dihydroguanosine 5'-triphosphate. This Methanocaldococcus jannaschii (strain ATCC 43067 / DSM 2661 / JAL-1 / JCM 10045 / NBRC 100440) (Methanococcus jannaschii) protein is Probable GTP 3',8-cyclase.